Reading from the N-terminus, the 353-residue chain is Chorismate synthase (353 aa).

Arg-48 is a binding site for NADP(+). Residues 125-127, 238-239, Gly-278, 293-297, and Arg-319 each bind FMN; these read RSS, NA, and KPTSS.

It belongs to the chorismate synthase family. In terms of assembly, homotetramer. FMNH2 serves as cofactor.

The enzyme catalyses 5-O-(1-carboxyvinyl)-3-phosphoshikimate = chorismate + phosphate. It participates in metabolic intermediate biosynthesis; chorismate biosynthesis; chorismate from D-erythrose 4-phosphate and phosphoenolpyruvate: step 7/7. Its function is as follows. Catalyzes the anti-1,4-elimination of the C-3 phosphate and the C-6 proR hydrogen from 5-enolpyruvylshikimate-3-phosphate (EPSP) to yield chorismate, which is the branch point compound that serves as the starting substrate for the three terminal pathways of aromatic amino acid biosynthesis. This reaction introduces a second double bond into the aromatic ring system. The chain is Chorismate synthase from Buchnera aphidicola subsp. Cinara cedri (strain Cc).